The primary structure comprises 2311 residues: C2 domain-containing protein 3 (2311 aa).

Disordered stretches follow at residues 447-511 and 543-562; these read SDSS…TSRC and GTAV…RPVR. The segment covering 470-509 has biased composition (basic and acidic residues); it reads IALDRGRHRDNSPSEYKEDAKQTKGNDSLRDSKTSEKSTS. 6 C2 domains span residues 508 to 666, 751 to 888, 952 to 1112, 1136 to 1303, 1370 to 1505, and 1581 to 1713; these read TSRC…SVTC, GNGG…TRLL, LDPP…HRED, PSGL…SGWY, HKRE…TLAV, and KTEV…CGWY. The interval 939–964 is disordered; that stretch reads GTSQTAMPRPAHFLDPPLSSSQMGRP. Disordered stretches follow at residues 1536 to 1589, 1955 to 1977, 2036 to 2065, 2084 to 2233, and 2261 to 2292; these read PSNS…LLDA, SEAY…GSLN, MTDR…PVNP, NDPS…SNLL, and VREG…PKEE. Basic and acidic residues-rich tracts occupy residues 1565-1589 and 1955-1964; these read FEEK…LLDA and SEAYEREGQR. The span at 2036–2047 shows a compositional bias: polar residues; it reads MTDRTSPWSSIL. Basic and acidic residues predominate over residues 2048 to 2059; it reads SERDSDSMDHPQ. Residues 2084–2095 show a composition bias toward polar residues; that stretch reads NDPSSVLSSARS. The span at 2138 to 2151 shows a compositional bias: acidic residues; it reads AESEAESQEMDGDP. Residues 2221 to 2233 show a composition bias toward polar residues; the sequence is GSESPQVPPSNLL.

It localises to the cytoplasm. The protein localises to the cytoskeleton. The protein resides in the cilium basal body. Its subcellular location is the microtubule organizing center. It is found in the centrosome. It localises to the centriole. Component of the centrioles that acts as a positive regulator of centriole elongation. Promotes assembly of centriolar distal appendage, a structure at the distal end of the mother centriole that acts as an anchor of the cilium. Required for primary cilium formation. In Xenopus tropicalis (Western clawed frog), this protein is C2 domain-containing protein 3 (c2cd3).